The chain runs to 122 residues: MICOS complex subunit MIC13 homolog QIL1 (122 aa).

The helical transmembrane segment at 9-25 (GGLVAATVYYTQKVGIW) threads the bilayer.

It belongs to the MICOS complex subunit Mic13 family. As to quaternary structure, component of the mitochondrial contact site and cristae organizing system (MICOS) complex.

The protein resides in the mitochondrion inner membrane. Its function is as follows. Component of the MICOS complex, a large protein complex of the mitochondrial inner membrane that plays crucial roles in the maintenance of crista junctions, inner membrane architecture, and formation of contact sites to the outer membrane. This is MICOS complex subunit MIC13 homolog QIL1 from Drosophila melanogaster (Fruit fly).